We begin with the raw amino-acid sequence, 258 residues long: Indole-3-glycerol phosphate synthase (258 aa).

It belongs to the TrpC family.

It catalyses the reaction 1-(2-carboxyphenylamino)-1-deoxy-D-ribulose 5-phosphate + H(+) = (1S,2R)-1-C-(indol-3-yl)glycerol 3-phosphate + CO2 + H2O. Its pathway is amino-acid biosynthesis; L-tryptophan biosynthesis; L-tryptophan from chorismate: step 4/5. The polypeptide is Indole-3-glycerol phosphate synthase (Legionella pneumophila (strain Lens)).